Reading from the N-terminus, the 1526-residue chain is High affinity cGMP-specific 3',5'-cyclic phosphodiesterase 9A (1526 aa).

The segment covering 1-43 has biased composition (low complexity); sequence MYQDSGCSSSSSRRGSSSAAAATSTAATAAETAAAAAATTTSS. Disordered stretches follow at residues 1–48, 266–348, and 393–476; these read MYQD…DEET, SSRS…SGTA, and RHHH…ASDC. Basic and acidic residues-rich tracts occupy residues 270-282 and 305-314; these read RSSE…HEQD and EHPSEKPERT. Composition is skewed to low complexity over residues 324-348 and 401-440; these read IAVT…SGTA and QQHQ…ATAT. Residues 441–462 are compositionally biased toward polar residues; sequence PSVEQPATSGTTNIHLQPTSLP. The PDEase domain occupies 664–985; it reads VKRRFLEICD…EYYRRLNDAQ (322 aa). The active-site Proton donor is the H740. A 3',5'-cyclic GMP-binding site is contributed by 740 to 744; it reads HNFRH. Zn(2+) is bound by residues H744, H780, D781, and D890. The 3',5'-cyclic GMP site is built by D781 and D890. A Mg(2+)-binding site is contributed by D781. 5 disordered regions span residues 986–1170, 1265–1284, 1314–1351, 1372–1406, and 1469–1496; these read TKTR…SSGG, TEAD…KKIP, SNGS…GSSW, RFGS…DGLG, and RYSS…LTTG. Low complexity predominate over residues 993-1005; sequence ADSNTSATSDSNS. Gly residues predominate over residues 1033 to 1057; it reads NSQGSGGGGGGGGGGGAGGGTGSGC. Over residues 1065–1093 the composition is skewed to polar residues; that stretch reads VSPQMPRSGSGISVKSRRSIPSQKSASRT. Residues 1125 to 1136 are compositionally biased toward basic and acidic residues; the sequence is VAEKTSKFKVDT. Residues 1139–1148 are compositionally biased toward low complexity; sequence SSNRSKSSHS. Positions 1314–1324 are enriched in low complexity; the sequence is SNGSTRSSASS. Residues 1325-1340 show a composition bias toward gly residues; that stretch reads GRGGSGVPGGSGGSGM. 2 stretches are compositionally biased toward low complexity: residues 1341-1350 and 1375-1397; these read PGPSAGSGSS and STRS…NANG. A compositionally biased stretch (polar residues) spans 1470–1486; the sequence is YSSNDSSRHPSNNTLQS.

Belongs to the cyclic nucleotide phosphodiesterase family. PDE9 subfamily. Zn(2+) serves as cofactor. The cofactor is Mg(2+). In terms of tissue distribution, expressed in Malpighian tubules and adult fly head.

It carries out the reaction 3',5'-cyclic GMP + H2O = GMP + H(+). It functions in the pathway purine metabolism; 3',5'-cyclic GMP degradation; GMP from 3',5'-cyclic GMP: step 1/1. Specifically hydrolyzes the second messenger cGMP, which is a key regulator of many important physiological processes. Highly specific: compared to other members of the cyclic nucleotide phosphodiesterase family, has the highest affinity and selectivity for cGMP. This is High affinity cGMP-specific 3',5'-cyclic phosphodiesterase 9A from Drosophila melanogaster (Fruit fly).